The sequence spans 345 residues: N-glycosylase/DNA lyase (345 aa).

3 residues coordinate DNA: Asn149, Arg154, and Arg204. The Schiff-base intermediate with DNA role is filled by Lys249. Residues Pro266 and Asp268 each contribute to the 8-oxoguanine site. 2 residues coordinate DNA: His270 and Gln287. 8-oxoguanine is bound by residues Gln315 and Phe319.

It belongs to the type-1 OGG1 family. In terms of tissue distribution, highest expression in testis.

It is found in the nucleus. The protein resides in the nucleoplasm. Its subcellular location is the nucleus speckle. The protein localises to the nucleus matrix. The enzyme catalyses 2'-deoxyribonucleotide-(2'-deoxyribose 5'-phosphate)-2'-deoxyribonucleotide-DNA = a 3'-end 2'-deoxyribonucleotide-(2,3-dehydro-2,3-deoxyribose 5'-phosphate)-DNA + a 5'-end 5'-phospho-2'-deoxyribonucleoside-DNA + H(+). DNA repair enzyme that incises DNA at 8-oxoG residues. Excises 7,8-dihydro-8-oxoguanine and 2,6-diamino-4-hydroxy-5-N-methylformamidopyrimidine (FAPY) from damaged DNA. Has a beta-lyase activity that nicks DNA 3' to the lesion. This Mus musculus (Mouse) protein is N-glycosylase/DNA lyase (Ogg1).